Reading from the N-terminus, the 237-residue chain is Ribosomal RNA small subunit methyltransferase G (237 aa).

The disordered stretch occupies residues 1–25; that stretch reads MASRHSPQTAAQPDAADKAQALRLT. Residues 7–21 are compositionally biased toward low complexity; it reads PQTAAQPDAADKAQA. Residues G85, F90, and R155 each contribute to the S-adenosyl-L-methionine site.

The protein belongs to the methyltransferase superfamily. RNA methyltransferase RsmG family.

The protein localises to the cytoplasm. It catalyses the reaction guanosine(527) in 16S rRNA + S-adenosyl-L-methionine = N(7)-methylguanosine(527) in 16S rRNA + S-adenosyl-L-homocysteine. Specifically methylates the N7 position of guanine in position 527 of 16S rRNA. The protein is Ribosomal RNA small subunit methyltransferase G of Rhodopseudomonas palustris (strain HaA2).